The sequence spans 429 residues: Saccharopine dehydrogenase-like oxidoreductase (429 aa).

Position 2 is an N-acetylalanine (Ala2). 3 positions are modified to phosphoserine: Ser209, Ser215, and Ser217.

This sequence belongs to the saccharopine dehydrogenase family.

This is Saccharopine dehydrogenase-like oxidoreductase (Sccpdh) from Mus musculus (Mouse).